The chain runs to 81 residues: Defensin-like protein 266 (81 aa).

The first 26 residues, 1–26, serve as a signal peptide directing secretion; sequence MEKIVFRKIVFVAFLLSLSCLLEGEA. Cystine bridges form between Cys40–Cys58, Cys46–Cys63, and Cys50–Cys65.

It belongs to the DEFL family.

The protein localises to the secreted. The sequence is that of Defensin-like protein 266 from Arabidopsis thaliana (Mouse-ear cress).